Consider the following 289-residue polypeptide: ATP synthase subunit gamma, mitochondrial (289 aa).

Belongs to the ATPase gamma chain family. F-type ATPases have 2 components, CF(1) - the catalytic core - and CF(0) - the membrane proton channel. CF(1) has five subunits: alpha(3), beta(3), gamma(1), delta(1), epsilon(1). CF(0) has three main subunits: a, b and c.

The protein resides in the mitochondrion. It is found in the mitochondrion inner membrane. Mitochondrial membrane ATP synthase (F(1)F(0) ATP synthase or Complex V) produces ATP from ADP in the presence of a proton gradient across the membrane which is generated by electron transport complexes of the respiratory chain. F-type ATPases consist of two structural domains, F(1) - containing the extramembraneous catalytic core, and F(0) - containing the membrane proton channel, linked together by a central stalk and a peripheral stalk. During catalysis, ATP synthesis in the catalytic domain of F(1) is coupled via a rotary mechanism of the central stalk subunits to proton translocation. Part of the complex F(1) domain and the central stalk which is part of the complex rotary element. The gamma subunit protrudes into the catalytic domain formed of alpha(3)beta(3). Rotation of the central stalk against the surrounding alpha(3)beta(3) subunits leads to hydrolysis of ATP in three separate catalytic sites on the beta subunits. The polypeptide is ATP synthase subunit gamma, mitochondrial (ATP3) (Kluyveromyces lactis (strain ATCC 8585 / CBS 2359 / DSM 70799 / NBRC 1267 / NRRL Y-1140 / WM37) (Yeast)).